The primary structure comprises 577 residues: Proline--tRNA ligase (577 aa).

This sequence belongs to the class-II aminoacyl-tRNA synthetase family. ProS type 1 subfamily. In terms of assembly, homodimer.

The protein localises to the cytoplasm. It catalyses the reaction tRNA(Pro) + L-proline + ATP = L-prolyl-tRNA(Pro) + AMP + diphosphate. Functionally, catalyzes the attachment of proline to tRNA(Pro) in a two-step reaction: proline is first activated by ATP to form Pro-AMP and then transferred to the acceptor end of tRNA(Pro). As ProRS can inadvertently accommodate and process non-cognate amino acids such as alanine and cysteine, to avoid such errors it has two additional distinct editing activities against alanine. One activity is designated as 'pretransfer' editing and involves the tRNA(Pro)-independent hydrolysis of activated Ala-AMP. The other activity is designated 'posttransfer' editing and involves deacylation of mischarged Ala-tRNA(Pro). The misacylated Cys-tRNA(Pro) is not edited by ProRS. This is Proline--tRNA ligase from Thermotoga sp. (strain RQ2).